The following is a 270-amino-acid chain: Regulatory protein RecX (270 aa).

The protein belongs to the RecX family.

It is found in the cytoplasm. Functionally, modulates RecA activity. This Bacillus mycoides (strain KBAB4) (Bacillus weihenstephanensis) protein is Regulatory protein RecX.